The sequence spans 202 residues: Histone chaperone ASF1B (202 aa).

The segment at 1–155 is interaction with CHAF1B; it reads MAKVSVLNVA…VTRFHINWDN (155 aa). Residues 1-156 form an interaction with histone H3 region; the sequence is MAKVSVLNVA…TRFHINWDNN (156 aa). Ser-198 bears the Phosphoserine; by TLK2 mark.

It belongs to the ASF1 family. In terms of assembly, interacts with histone H3 (via C-terminus), including histone H3.1, H3.2 and H3.3, and histone H4; the interaction with H3 is direct. Interacts with the CHAF1A, CHAF1B and RBBP4 subunits of the CAF-1 complex. Interacts with HAT1, NASP and TAF1. Found in a soluble complex with NASP and histones H3 and H4; the interaction with NASP is probably indirect and mediated by H3-H4. Interacts with CDAN1. Found in a cytosolic complex with IPO4 and histones H3 and H4. Interacts with CREBBP. Phosphorylated by TLK1 and TLK2. As to expression, highly expressed in testis and at lower levels in colon, small intestine and thymus.

It is found in the nucleus. Its subcellular location is the cytoplasm. The protein localises to the cytosol. Functionally, histone chaperone that facilitates histone deposition and histone exchange and removal during nucleosome assembly and disassembly. Cooperates with chromatin assembly factor 1 (CAF-1) to promote replication-dependent chromatin assembly. Also involved in the nuclear import of the histone H3-H4 dimer together with importin-4 (IPO4): specifically recognizes and binds newly synthesized histones with the monomethylation of H3 'Lys-9' (H3K9me1) and diacetylation at 'Lys-5' and 'Lys-12' of H4 (H4K5K12ac) marks in the cytosol. Does not participate in replication-independent nucleosome deposition which is mediated by ASF1A and HIRA. Required for gonad development. The sequence is that of Histone chaperone ASF1B from Homo sapiens (Human).